The sequence spans 98 residues: Large ribosomal subunit protein bL28 (98 aa).

This sequence belongs to the bacterial ribosomal protein bL28 family.

This chain is Large ribosomal subunit protein bL28, found in Beijerinckia indica subsp. indica (strain ATCC 9039 / DSM 1715 / NCIMB 8712).